Reading from the N-terminus, the 299-residue chain is Delta-9 desaturase-like 3 protein (299 aa).

Helical transmembrane passes span 38–57 (AVGA…TWEA) and 58–76 (FRFA…TFSY). A Histidine box-1 motif is present at residues 77 to 82 (HRNLTH). The Histidine box-2 signature appears at 114–118 (HRFHH). A run of 2 helical transmembrane segments spans residues 174–194 (IGLH…LPYL) and 198–218 (VGVG…ACHI). The Histidine box-3 motif lies at 246–250 (HNNHH). A helical transmembrane segment spans residues 262-282 (WYQVDLTWYLIWFFQVLGLAT).

This sequence belongs to the fatty acid desaturase type 1 family. Fe cation is required as a cofactor.

It is found in the endoplasmic reticulum membrane. It functions in the pathway lipid metabolism; polyunsaturated fatty acid biosynthesis. In Arabidopsis thaliana (Mouse-ear cress), this protein is Delta-9 desaturase-like 3 protein.